A 200-amino-acid chain; its full sequence is Phospholipase A2 inhibitor 1 (200 aa).

Positions 1 to 19 are cleaved as a signal peptide; it reads MKSLHIICLLFIFVARGNS. Intrachain disulfides connect C22–C46, C25–C32, C39–C67, C73–C94, C95–C100, C118–C143, C136–C165, and C169–C191. N176 carries an N-linked (GlcNAc...) asparagine glycan.

It belongs to the CNF-like-inhibitor family. In terms of assembly, occurs as a mixture of oligomers. Tetrameric arrangement appears to be the predominant quaternary structure. Post-translationally, N-glycosylated. Expressed by the liver.

The protein localises to the secreted. Functionally, inhibits basic phospholipase A2 isozymes PLA-B, BP-I and BP-II. The sequence is that of Phospholipase A2 inhibitor 1 from Protobothrops flavoviridis (Habu).